The sequence spans 255 residues: Tryptophan synthase alpha chain (255 aa).

Residues glutamate 44 and aspartate 55 each act as proton acceptor in the active site.

It belongs to the TrpA family. As to quaternary structure, tetramer of two alpha and two beta chains.

It catalyses the reaction (1S,2R)-1-C-(indol-3-yl)glycerol 3-phosphate + L-serine = D-glyceraldehyde 3-phosphate + L-tryptophan + H2O. The protein operates within amino-acid biosynthesis; L-tryptophan biosynthesis; L-tryptophan from chorismate: step 5/5. Its function is as follows. The alpha subunit is responsible for the aldol cleavage of indoleglycerol phosphate to indole and glyceraldehyde 3-phosphate. This chain is Tryptophan synthase alpha chain, found in Dehalococcoides mccartyi (strain ATCC BAA-2100 / JCM 16839 / KCTC 5957 / BAV1).